A 218-amino-acid polypeptide reads, in one-letter code: Ras-related protein RABA1h (218 aa).

20 to 27 (GDSGVGKS) contributes to the GTP binding site. The Effector region motif lies at 42–50 (SRSTIGVEF). Residues 68–72 (DTAGQ), 126–129 (NKAD), and 156–157 (SA) contribute to the GTP site. S-geranylgeranyl cysteine attachment occurs at residues C215 and C216.

It belongs to the small GTPase superfamily. Rab family.

It is found in the cell membrane. Intracellular vesicle trafficking and protein transport. The chain is Ras-related protein RABA1h (RABA1H) from Arabidopsis thaliana (Mouse-ear cress).